The chain runs to 341 residues: Heat-inducible transcription repressor HrcA (341 aa).

This sequence belongs to the HrcA family.

Functionally, negative regulator of class I heat shock genes (grpE-dnaK-dnaJ and groELS operons). Prevents heat-shock induction of these operons. The chain is Heat-inducible transcription repressor HrcA from Mycobacteroides abscessus (strain ATCC 19977 / DSM 44196 / CCUG 20993 / CIP 104536 / JCM 13569 / NCTC 13031 / TMC 1543 / L948) (Mycobacterium abscessus).